A 611-amino-acid chain; its full sequence is Rho-related BTB domain-containing protein 3 (611 aa).

The segment at 1 to 175 (MSIHIVALGN…KELGATYLEL (175 aa)) is rho-like. 2 BTB domains span residues 254–356 (VDVV…QWEE) and 420–487 (ADVV…CPAG). The segment at 420–611 (ADVVFEIQGT…HSRKCRCLVM (192 aa)) is interaction with Rab9.

As to quaternary structure, interacts with RAB9A and RAB9B (at lower level compared to RAB9A-binding). Interacts with M6PRBP1/TIP47. As to expression, ubiquitous. Highly expressed in neural and cardiac tissues, pancreas, placenta and testis.

It is found in the golgi apparatus. In terms of biological role, rab9-regulated ATPase required for endosome to Golgi transport. Involved in transport vesicle docking at the Golgi complex, possibly by participating in release M6PRBP1/TIP47 from vesicles to permit their efficient docking and fusion at the Golgi. Specifically binds Rab9, but not other Rab proteins. Has low intrinsic ATPase activity due to autoinhibition, which is relieved by Rab9. The sequence is that of Rho-related BTB domain-containing protein 3 (RHOBTB3) from Homo sapiens (Human).